The primary structure comprises 367 residues: Putative methylthioribose-1-phosphate isomerase (367 aa).

Residues 65–67 (RGA), arginine 106, and glutamine 218 each bind substrate. The active-site Proton donor is the aspartate 259. Position 269-270 (269-270 (NK)) interacts with substrate.

The protein belongs to the eIF-2B alpha/beta/delta subunits family. MtnA subfamily.

It catalyses the reaction 5-(methylsulfanyl)-alpha-D-ribose 1-phosphate = 5-(methylsulfanyl)-D-ribulose 1-phosphate. Functionally, catalyzes the interconversion of methylthioribose-1-phosphate (MTR-1-P) into methylthioribulose-1-phosphate (MTRu-1-P). The protein is Putative methylthioribose-1-phosphate isomerase of Sulfolobus acidocaldarius (strain ATCC 33909 / DSM 639 / JCM 8929 / NBRC 15157 / NCIMB 11770).